A 198-amino-acid polypeptide reads, in one-letter code: NAD(P)H dehydrogenase (quinone) (198 aa).

The 185-residue stretch at 6–190 folds into the Flavodoxin-like domain; sequence ILVLYYSRHG…LCRALGKRLA (185 aa). Residues 12–17, 79–81, 114–120, and histidine 135 contribute to the FMN site; these read SRHGAT, TRF, and STASLHG.

The protein belongs to the WrbA family. As to quaternary structure, homodimer. Requires FMN as cofactor.

It carries out the reaction a quinone + NADH + H(+) = a quinol + NAD(+). The catalysed reaction is a quinone + NADPH + H(+) = a quinol + NADP(+). The polypeptide is NAD(P)H dehydrogenase (quinone) (Pseudomonas aeruginosa (strain ATCC 15692 / DSM 22644 / CIP 104116 / JCM 14847 / LMG 12228 / 1C / PRS 101 / PAO1)).